The chain runs to 698 residues: MRPMRIFLNDDRHVMAKHSVVYPTQEELEAVQNMVSHTERALKAVSDWIDQQEKDCSGEQEQPEPEEPETTEEGKDSEGKTGENPTRTLRGVMRVGLVAKGLLLKGDLDLELVLLCRDKPTISLLKRVADNLVLQFETVSEDKYEVIQNIREASIVIKNTKEPPLTLNIRLTSPLVREEMEKLSAGETLTVSDPPDVLDRHKCLAALASLRHAKWFQARANGLKSCVIVIRVLRDLCTRVPTWEPLRGWPLELLCEKAIGTANRPMGAGEALRRVLECLSSGILMPDGPGLYDPCEKEASDALEHLERQQREDITQSAQHALRLAAFGQLHKVLGMDPLPTKIPKKTKVETPTIDYTVQIPPSTTYAMPALKRPMEEDGEDKSPSKKKKKIQKKDEKSEPPQAMNALMRLNQLKPGLQYKLISQTGPVHAPIFTMSVEVDEKTFEASGPSKKTAKLHVAVKVLQDMGLPTGMEEKEEATDESEQKPVVQTPAQPADSTQTDSAADQAESAKQQGPILTKHGKNPVMELNEKRRGLKYELISETGGSHDKRFVMEVEVDGVKFQGSGSNKKVAKAYAALAALEKLFPDYTTYAEAPKKKRPPMMPRGGPKFAGKHNQGFGMMYNEVPPPQAMRGRGRGGMNRGRGRGRGGFGGGNHGGYMNSGGYGGGYGGNYNYQTSATAGYSDFFTDCYGYHDFASA.

The DZF domain maps to 5 to 379 (RIFLNDDRHV…ALKRPMEEDG (375 aa)). Disordered regions lie at residues 51–88 (QQEK…PTRT), 374–403 (PMEE…PPQA), and 473–522 (EEKE…KHGK). The span at 61–71 (EQPEPEEPETT) shows a compositional bias: acidic residues. 2 stretches are compositionally biased toward basic and acidic residues: residues 72–81 (EEGKDSEGKT) and 374–384 (PMEEDGEDKSP). The short motif at 372–390 (KRPMEEDGEDKSPSKKKKK) is the Bipartite nuclear localization signal element. Residues 399 to 468 (EPPQAMNALM…AVKVLQDMGL (70 aa)) form the DRBM 1 domain. Over residues 490–503 (TPAQPADSTQTDSA) the composition is skewed to polar residues. A DRBM 2 domain is found at 520 to 586 (HGKNPVMELN…ALAALEKLFP (67 aa)).

A component of a ybx2/frgy2-containing mRNA-ribonucleoprotein (mRNP) complex. Also a component of the CCAAT box transcription factor (CBTF) complex. In terms of processing, phosphorylated. Phosphorylation affects nuclear translocation. Post-translationally, methylated by protein arginine N-methyltransferase 1 (prmt1b) in the RGG-rich domain. Methylation decreases DNA-binding and thereby decreases transcription of the gata2 gene, but does not regulate dsRNA binding or subcellular localization.

Its subcellular location is the nucleus. The protein resides in the cytoplasm. Its function is as follows. RNA-binding protein that plays an essential role in the biogenesis of circular RNAs (circRNAs) which are produced by back-splicing circularization of pre-mRNAs. Within the nucleus, promotes circRNAs processing by stabilizing the regulatory elements residing in the flanking introns of the circularized exons. Plays thereby a role in the back-splicing of a subset of circRNAs. As a consequence, participates in a wide range of transcriptional and post-transcriptional processes. Binds to poly-U elements and AU-rich elements (AREs) in the 3'-UTR of target mRNAs. Upon viral infection, ILF3 accumulates in the cytoplasm and participates in the innate antiviral response. Mechanistically, ILF3 becomes phosphorylated and activated by the double-stranded RNA-activated protein kinase/PKR which releases ILF3 from cellular mature circRNAs. In turn, unbound ILF3 molecules are able to interact with and thus inhibit viral mRNAs. Has a cytoplasmic role early in development as part of a ribonucleoprotein (mRNP) complex which may regulate mRNA transport and/or translation. Following nuclear localization at the mid-blastula transition, acts as a transcription factor and binds the 5'-CCAAT-3' promoter sequence to regulate transcription of the gata2 gene as a subunit of the CCAAT box transcription factor (CBTF). Its role as an mRNP component negatively regulates its activity as a transcription factor by precluding its nuclear localization. This is Interleukin enhancer-binding factor 3 from Xenopus tropicalis (Western clawed frog).